The primary structure comprises 263 residues: Lens fiber major intrinsic protein (263 aa).

The Cytoplasmic segment spans residues Met1–Phe9. Residues Trp10 to Gly29 traverse the membrane as a helical segment. Residues Ala30–Val41 are Extracellular-facing. The helical transmembrane segment at Leu42–Ile59 threads the bilayer. Topologically, residues Gly60–His61 are cytoplasmic. An intramembrane region (discontinuously helical) is located at residues Val62–Ile77. The NPA 1 signature appears at Asn68–Ala70. The Cytoplasmic portion of the chain corresponds to Gly78–Ser82. A helical transmembrane segment spans residues Leu83–Gly106. The Extracellular portion of the chain corresponds to Val107 to Leu127. Residues Gly128–Thr148 traverse the membrane as a helical segment. At Tyr149–Arg156 the chain is on the cytoplasmic side. The helical transmembrane segment at Leu157–Gly175 threads the bilayer. The Extracellular segment spans residues Leu176 to Tyr178. An intramembrane region (discontinuously helical) is located at residues Thr179–Val193. Positions Asn184–Ala186 match the NPA 2 motif. Residues Leu194–Asn200 are Extracellular-facing. The chain crosses the membrane as a helical span at residues His201–Ile222. Residues Leu223–Leu263 lie on the Cytoplasmic side of the membrane. Positions Met227 to Leu237 are interaction with CALM. The segment at Arg241–Leu263 is disordered.

The protein belongs to the MIP/aquaporin (TC 1.A.8) family. In terms of assembly, homotetramer; each monomer provides an independent water pore. Two homotetramers on opposing membranes can dimerize, forming a cell-cell junction. Interacts with CALM; the calcium-calmodulin/CALM complex interacts with the cytoplasmic domains of two aquaporins, leading to channel closure.

It localises to the cell membrane. It is found in the cell junction. It catalyses the reaction H2O(in) = H2O(out). Its activity is regulated as follows. The water channel activity is inhibited by calcium through calmodulin/CALM. Aquaporins form homotetrameric transmembrane channels, with each monomer independently mediating water transport across the plasma membrane along its osmotic gradient. Specifically expressed in lens fiber cells, this aquaporin is crucial for maintaining lens water homeostasis and transparency. Beyond water permeability, it also acts as a cell-to-cell adhesion molecule, forming thin junctions between lens fiber cells that are essential for maintaining the ordered structure and transparency of the lens. The sequence is that of Lens fiber major intrinsic protein from Lithobates pipiens (Northern leopard frog).